The primary structure comprises 876 residues: Alanine--tRNA ligase (876 aa).

Zn(2+)-binding residues include H564, H568, C666, and H670.

The protein belongs to the class-II aminoacyl-tRNA synthetase family. In terms of assembly, homotetramer. The cofactor is Zn(2+).

It is found in the cytoplasm. The catalysed reaction is tRNA(Ala) + L-alanine + ATP = L-alanyl-tRNA(Ala) + AMP + diphosphate. Catalyzes the attachment of alanine to tRNA(Ala) in a two-step reaction: alanine is first activated by ATP to form Ala-AMP and then transferred to the acceptor end of tRNA(Ala). Also edits incorrectly charged Ser-tRNA(Ala) and Gly-tRNA(Ala) via its editing domain. This is Alanine--tRNA ligase from Salmonella typhi.